The chain runs to 317 residues: Small glutamine-rich tetratricopeptide repeat-containing protein 2 (317 aa).

TPR repeat units lie at residues 14-48, 83-116, 118-150, and 151-184; these read LKQAITTGSISEEEKESLEVAAQCIQDSFKIKPEE, AEKLKLEGNNAIAAKDYQKALDLYTKAIEIDPTS, VYYSNRAAAYNQLGQFENAVEDALTCLSLDPHH, and ARAFGRLGRAKLSLGDAAAAADAYKKGLDFDPNN. Polar residues predominate over residues 198 to 215; the sequence is LNQPSDSSATSGADQART. 2 disordered regions span residues 198–224 and 298–317; these read LNQPSDSSATSGADQARTSAGAAPDLG and MNNNNNGNTDNNNQGNPPPQ.

The protein belongs to the SGT family.

The protein localises to the cytoplasm. Its subcellular location is the nucleus. Its function is as follows. Co-chaperone that binds to the molecular chaperone Hsp70 and regulates Hsp70 ATPase activity. This is Small glutamine-rich tetratricopeptide repeat-containing protein 2 (sgt2) from Schizosaccharomyces pombe (strain 972 / ATCC 24843) (Fission yeast).